Here is a 145-residue protein sequence, read N- to C-terminus: D-aminoacyl-tRNA deacylase (145 aa).

The short motif at 137–138 (GP) is the Gly-cisPro motif, important for rejection of L-amino acids element.

Belongs to the DTD family. Homodimer.

Its subcellular location is the cytoplasm. It carries out the reaction glycyl-tRNA(Ala) + H2O = tRNA(Ala) + glycine + H(+). It catalyses the reaction a D-aminoacyl-tRNA + H2O = a tRNA + a D-alpha-amino acid + H(+). An aminoacyl-tRNA editing enzyme that deacylates mischarged D-aminoacyl-tRNAs. Also deacylates mischarged glycyl-tRNA(Ala), protecting cells against glycine mischarging by AlaRS. Acts via tRNA-based rather than protein-based catalysis; rejects L-amino acids rather than detecting D-amino acids in the active site. By recycling D-aminoacyl-tRNA to D-amino acids and free tRNA molecules, this enzyme counteracts the toxicity associated with the formation of D-aminoacyl-tRNA entities in vivo and helps enforce protein L-homochirality. This is D-aminoacyl-tRNA deacylase from Pseudomonas putida (strain ATCC 700007 / DSM 6899 / JCM 31910 / BCRC 17059 / LMG 24140 / F1).